A 599-amino-acid polypeptide reads, in one-letter code: Sulfite reductase [NADPH] flavoprotein alpha-component (599 aa).

Positions Ile64 to Val202 constitute a Flavodoxin-like domain. Residues Ser70–Ala75, Ser117–Gly120, and Leu153–Cys162 contribute to the FMN site. In terms of domain architecture, FAD-binding FR-type spans Asp234–Pro448. FAD-binding positions include Thr322, Ala356, Arg386–Ser389, Thr404–Gly406, Tyr410, and Gly419–Ser422. Residues Ser519–Arg520, Lys525–Gln529, and Asp561 contribute to the NADP(+) site. Position 599 (Tyr599) interacts with FAD.

The protein belongs to the NADPH-dependent sulphite reductase flavoprotein subunit CysJ family. This sequence in the N-terminal section; belongs to the flavodoxin family. In the C-terminal section; belongs to the flavoprotein pyridine nucleotide cytochrome reductase family. Alpha(8)-beta(8). The alpha component is a flavoprotein, the beta component is a hemoprotein. FAD serves as cofactor. It depends on FMN as a cofactor.

The catalysed reaction is hydrogen sulfide + 3 NADP(+) + 3 H2O = sulfite + 3 NADPH + 4 H(+). Its pathway is sulfur metabolism; hydrogen sulfide biosynthesis; hydrogen sulfide from sulfite (NADPH route): step 1/1. Its function is as follows. Component of the sulfite reductase complex that catalyzes the 6-electron reduction of sulfite to sulfide. This is one of several activities required for the biosynthesis of L-cysteine from sulfate. The flavoprotein component catalyzes the electron flow from NADPH -&gt; FAD -&gt; FMN to the hemoprotein component. This is Sulfite reductase [NADPH] flavoprotein alpha-component from Escherichia coli (strain ATCC 8739 / DSM 1576 / NBRC 3972 / NCIMB 8545 / WDCM 00012 / Crooks).